We begin with the raw amino-acid sequence, 239 residues long: Probable transcriptional regulatory protein YeeI (239 aa).

It belongs to the TACO1 family. YeeN subfamily.

It is found in the cytoplasm. The polypeptide is Probable transcriptional regulatory protein YeeI (yeeI) (Bacillus subtilis (strain 168)).